Consider the following 322-residue polypeptide: Aspartate--ammonia ligase (322 aa).

Belongs to the class-II aminoacyl-tRNA synthetase family. AsnA subfamily.

It localises to the cytoplasm. It carries out the reaction L-aspartate + NH4(+) + ATP = L-asparagine + AMP + diphosphate + H(+). The protein operates within amino-acid biosynthesis; L-asparagine biosynthesis; L-asparagine from L-aspartate (ammonia route): step 1/1. The sequence is that of Aspartate--ammonia ligase from Lactiplantibacillus plantarum (strain ATCC BAA-793 / NCIMB 8826 / WCFS1) (Lactobacillus plantarum).